Consider the following 803-residue polypeptide: Leucine--tRNA ligase (803 aa).

The short motif at 40–51 (PYPSGAGLHVGH) is the 'HIGH' region element. Residues 575-579 (KMSKS) carry the 'KMSKS' region motif. Residue Lys578 coordinates ATP.

Belongs to the class-I aminoacyl-tRNA synthetase family.

The protein localises to the cytoplasm. It carries out the reaction tRNA(Leu) + L-leucine + ATP = L-leucyl-tRNA(Leu) + AMP + diphosphate. The protein is Leucine--tRNA ligase of Listeria innocua serovar 6a (strain ATCC BAA-680 / CLIP 11262).